A 347-amino-acid chain; its full sequence is Phosphoribosylformylglycinamidine cyclo-ligase (347 aa).

Belongs to the AIR synthase family.

Its subcellular location is the cytoplasm. The catalysed reaction is 2-formamido-N(1)-(5-O-phospho-beta-D-ribosyl)acetamidine + ATP = 5-amino-1-(5-phospho-beta-D-ribosyl)imidazole + ADP + phosphate + H(+). Its pathway is purine metabolism; IMP biosynthesis via de novo pathway; 5-amino-1-(5-phospho-D-ribosyl)imidazole from N(2)-formyl-N(1)-(5-phospho-D-ribosyl)glycinamide: step 2/2. This is Phosphoribosylformylglycinamidine cyclo-ligase from Alkalilimnicola ehrlichii (strain ATCC BAA-1101 / DSM 17681 / MLHE-1).